Consider the following 334-residue polypeptide: Holliday junction branch migration complex subunit RuvB (334 aa).

Residues 4–184 form a large ATPase domain (RuvB-L) region; sequence ADRLIQPQDL…FGIPLRLEFY (181 aa). ATP-binding positions include Arg24, Gly65, Lys68, Thr69, Thr70, 131-133, Arg174, Tyr184, and Arg221; that span reads EDY. Thr69 contacts Mg(2+). The segment at 185–255 is small ATPAse domain (RuvB-S); that stretch reads NVRDLSSIVA…VAQSALDLLD (71 aa). The segment at 258 to 334 is head domain (RuvB-H); the sequence is SEGFDYMDRK…YSHFDLIKPD (77 aa). DNA contacts are provided by Arg294, Arg313, and Arg318.

It belongs to the RuvB family. In terms of assembly, homohexamer. Forms an RuvA(8)-RuvB(12)-Holliday junction (HJ) complex. HJ DNA is sandwiched between 2 RuvA tetramers; dsDNA enters through RuvA and exits via RuvB. An RuvB hexamer assembles on each DNA strand where it exits the tetramer. Each RuvB hexamer is contacted by two RuvA subunits (via domain III) on 2 adjacent RuvB subunits; this complex drives branch migration. In the full resolvosome a probable DNA-RuvA(4)-RuvB(12)-RuvC(2) complex forms which resolves the HJ.

It localises to the cytoplasm. It carries out the reaction ATP + H2O = ADP + phosphate + H(+). In terms of biological role, the RuvA-RuvB-RuvC complex processes Holliday junction (HJ) DNA during genetic recombination and DNA repair, while the RuvA-RuvB complex plays an important role in the rescue of blocked DNA replication forks via replication fork reversal (RFR). RuvA specifically binds to HJ cruciform DNA, conferring on it an open structure. The RuvB hexamer acts as an ATP-dependent pump, pulling dsDNA into and through the RuvAB complex. RuvB forms 2 homohexamers on either side of HJ DNA bound by 1 or 2 RuvA tetramers; 4 subunits per hexamer contact DNA at a time. Coordinated motions by a converter formed by DNA-disengaged RuvB subunits stimulates ATP hydrolysis and nucleotide exchange. Immobilization of the converter enables RuvB to convert the ATP-contained energy into a lever motion, pulling 2 nucleotides of DNA out of the RuvA tetramer per ATP hydrolyzed, thus driving DNA branch migration. The RuvB motors rotate together with the DNA substrate, which together with the progressing nucleotide cycle form the mechanistic basis for DNA recombination by continuous HJ branch migration. Branch migration allows RuvC to scan DNA until it finds its consensus sequence, where it cleaves and resolves cruciform DNA. The protein is Holliday junction branch migration complex subunit RuvB of Shewanella amazonensis (strain ATCC BAA-1098 / SB2B).